Reading from the N-terminus, the 954-residue chain is ATPase 9, plasma membrane-type (954 aa).

Residues 1–66 lie on the Cytoplasmic side of the membrane; sequence MAGNKDSSWD…EKKENKVLKF (66 aa). A helical transmembrane segment spans residues 67–86; it reads LGFMWNPLSWVMELAAIMAI. Over 87-98 the chain is Extracellular; that stretch reads ALANGGGRPPDW. The chain crosses the membrane as a helical span at residues 99–119; it reads QDFVGITVLLIINSTISFIEE. Over 120 to 248 the chain is Cytoplasmic; it reads NNAGNAAAAL…GHFQKVLTAI (129 aa). Residues 249-269 form a helical membrane-spanning segment; sequence GNFCICSIAIGMLIEIVVMYP. Topologically, residues 270–278 are extracellular; the sequence is IQKRAYRDG. A helical membrane pass occupies residues 279–296; sequence IDNLLVLLIGGIPIAMPT. At 297-648 the chain is on the cytoplasmic side; that stretch reads VLSVTMAIGS…TSRAIFQRMK (352 aa). Aspartate 334 functions as the 4-aspartylphosphate intermediate in the catalytic mechanism. Mg(2+) is bound by residues aspartate 593 and aspartate 597. Residues 649 to 670 form a helical membrane-spanning segment; that stretch reads NYTIYAVSITIRIVMGFMLLAL. Residues 671 to 675 are Extracellular-facing; that stretch reads IWKFD. A helical transmembrane segment spans residues 676-698; that stretch reads FSPFMVLIVAILNDGTIMTISKD. Residues 699–714 are Cytoplasmic-facing; that stretch reads RVKPSPLPDSWKLKEI. A helical transmembrane segment spans residues 715–735; sequence FATGVVLGTYLAVMTVVFFWA. Topologically, residues 736 to 756 are extracellular; that stretch reads AESTDFFSAKFGVRSISGNPH. A helical membrane pass occupies residues 757–777; that stretch reads ELTAAVYLQVSIVSQALIFVT. Topologically, residues 778 to 789 are cytoplasmic; the sequence is RSRSWSYVERPG. The chain crosses the membrane as a helical span at residues 790 to 810; the sequence is FWLISAFFMAQLIATLIAVYA. Over 811 to 818 the chain is Extracellular; that stretch reads NWNFARIR. Residues 819-839 traverse the membrane as a helical segment; sequence GIGWGWAGVIWLYSIVFYIPL. Over 840–954 the chain is Cytoplasmic; that stretch reads DILKFIIRYS…IEAIQQHYTL (115 aa). A Phosphothreonine modification is found at threonine 886. The residue at position 936 (serine 936) is a Phosphoserine. Residues 952 to 954 are interaction with 14-3-3 proteins; it reads YTL. A Phosphothreonine modification is found at threonine 953.

The protein belongs to the cation transport ATPase (P-type) (TC 3.A.3) family. Type IIIA subfamily. Binds to 14-3-3 proteins. The binding is induced by phosphorylation of Thr-953. Binding to 14-3-3 proteins activates the H(+)-ATPase. Anther specific. Expressed in guard cells.

It localises to the membrane. The catalysed reaction is ATP + H2O + H(+)(in) = ADP + phosphate + 2 H(+)(out). Its function is as follows. The plasma membrane H(+) ATPase of plants and fungi generates a proton gradient that drives the active transport of nutrients by H(+)-symport. The resulting external acidification and/or internal alkinization may mediate growth responses. In Arabidopsis thaliana (Mouse-ear cress), this protein is ATPase 9, plasma membrane-type (AHA9).